The following is a 1500-amino-acid chain: Carbamoyl-phosphate synthase [ammonia], mitochondrial (1500 aa).

Residues Met1–Leu38 constitute a mitochondrion transit peptide. An anthranilate phosphoribosyltransferase homolog region spans residues Leu39 to Thr218. N6-acetyllysine; alternate occurs at positions 55, 57, and 119. An N6-glutaryllysine; alternate modification is found at Lys55. An N6-succinyllysine; alternate mark is found at Lys55, Lys57, and Lys119. At Ser148 the chain carries Phosphoserine. N6-acetyllysine; alternate is present on residues Lys157 and Lys171. N6-succinyllysine; alternate is present on Lys157. At Lys171 the chain carries N6-glutaryllysine; alternate. Position 176 is an N6-glutaryllysine (Lys176). Lys182 carries the post-translational modification N6-acetyllysine. Ser189 carries the post-translational modification Phosphoserine. Residue Lys197 is modified to N6-acetyllysine. 5 positions are modified to N6-acetyllysine; alternate: Lys207, Lys210, Lys214, Lys219, and Lys228. N6-glutaryllysine; alternate occurs at positions 207, 210, 214, 219, and 228. N6-succinyllysine; alternate is present on Lys207. N6-succinyllysine; alternate is present on Lys214. Positions Lys219 to Thr404 constitute a Glutamine amidotransferase type-1 domain. Lys237 carries the post-translational modification N6-glutaryllysine. Residue Lys279 is modified to N6-acetyllysine. N6-acetyllysine; alternate is present on residues Lys280, Lys287, Lys307, and Lys310. The residue at position 280 (Lys280) is an N6-glutaryllysine; alternate. Lys287 and Lys307 each carry N6-succinyllysine; alternate. An N6-glutaryllysine; alternate mark is found at Lys307 and Lys310. Residue Lys400 is modified to N6-succinyllysine. 4 positions are modified to N6-glutaryllysine; alternate: Lys402, Lys412, Lys453, and Lys458. 2 positions are modified to N6-succinyllysine; alternate: Lys402 and Lys412. Residues Lys412, Lys453, Lys458, Lys522, Lys527, and Lys532 each carry the N6-acetyllysine; alternate modification. Residues Lys458, Lys522, and Lys527 each carry the N6-succinyllysine; alternate modification. Lys527 and Lys532 each carry N6-glutaryllysine; alternate. Residue Ser537 is modified to Phosphoserine; alternate. The O-linked (GlcNAc) serine; alternate glycan is linked to Ser537. The residue at position 540 (Ser540) is a Phosphoserine. The ATP-grasp 1 domain maps to Ser551–Leu743. N6-acetyllysine; alternate is present on residues Lys553 and Lys560. Residue Lys553 is modified to N6-glutaryllysine; alternate. 2 positions are modified to N6-succinyllysine; alternate: Lys553 and Lys560. Position 569 is a phosphoserine (Ser569). 3 positions are modified to N6-acetyllysine; alternate: Lys575, Lys603, and Lys612. Lys575, Lys603, and Lys612 each carry N6-succinyllysine; alternate. N6-acetyllysine is present on Lys630. At Lys728 the chain carries N6-glutaryllysine. 8 positions are modified to N6-acetyllysine; alternate: Lys751, Lys757, Lys772, Lys793, Lys811, Lys831, Lys841, and Lys856. Residues Lys751 and Lys757 each carry the N6-succinyllysine; alternate modification. An N6-glutaryllysine; alternate mark is found at Lys757, Lys772, Lys793, and Lys811. Lys793 carries the post-translational modification N6-succinyllysine; alternate. Lys831 is modified (N6-succinyllysine; alternate). N6-glutaryllysine; alternate is present on residues Lys841 and Lys856. At Lys869 the chain carries N6-glutaryllysine. Lys875, Lys889, and Lys892 each carry N6-acetyllysine; alternate. N6-glutaryllysine; alternate is present on residues Lys875, Lys889, and Lys892. N6-succinyllysine; alternate is present on residues Lys875, Lys889, and Lys892. Ser896 and Ser898 each carry phosphoserine. N6-acetyllysine; alternate is present on residues Lys908, Lys915, and Lys919. N6-glutaryllysine; alternate occurs at positions 908, 915, and 919. 2 positions are modified to N6-succinyllysine; alternate: Lys915 and Lys919. Lys935 bears the N6-acetyllysine mark. Phosphoserine is present on Ser1036. The residue at position 1074 (Lys1074) is an N6-acetyllysine; alternate. Lys1074 bears the N6-glutaryllysine; alternate mark. Residue Lys1074 is modified to N6-succinyllysine; alternate. A phosphoserine mark is found at Ser1079, Ser1090, and Ser1093. One can recognise an ATP-grasp 2 domain in the interval Ser1093 to Ile1284. Lys1100 is subject to N6-acetyllysine; alternate. Lys1100 is modified (N6-succinyllysine; alternate). Lys1149 bears the N6-succinyllysine mark. N6-acetyllysine; alternate occurs at positions 1168 and 1183. Lys1168 and Lys1183 each carry N6-glutaryllysine; alternate. N6-succinyllysine; alternate is present on residues Lys1168 and Lys1183. Ser1203 bears the Phosphoserine mark. N6-acetyllysine is present on Lys1222. Residue Lys1224 is modified to N6-glutaryllysine. N6-acetyllysine; alternate occurs at positions 1232, 1269, and 1291. N6-succinyllysine; alternate is present on residues Lys1232, Lys1269, and Lys1291. Ser1331 is a glycosylation site (O-linked (GlcNAc) serine). An O-linked (GlcNAc) threonine glycan is attached at Thr1332. The region spanning Phe1355–Ala1500 is the MGS-like domain. At Lys1356 the chain carries N6-acetyllysine; alternate. N6-glutaryllysine; alternate is present on residues Lys1356 and Lys1360. Residues Lys1356 and Lys1360 each carry the N6-succinyllysine; alternate modification. 3 residues coordinate N-acetyl-L-glutamate: Thr1391, Thr1394, and Trp1410. Phosphoserine occurs at positions 1419 and 1431. N-acetyl-L-glutamate is bound by residues Asn1437 and Asn1440. Lys1444 carries the N6-acetyllysine; alternate modification. At Lys1444 the chain carries N6-succinyllysine; alternate. Asn1449 contacts N-acetyl-L-glutamate. N6-acetyllysine; alternate is present on residues Lys1471, Lys1479, and Lys1486. N6-succinyllysine; alternate occurs at positions 1471, 1479, and 1486. Residues Lys1479 and Lys1486 each carry the N6-glutaryllysine; alternate modification.

As to quaternary structure, can form homooligomers (monomers as predominant form and dimers). Post-translationally, 50% of the mature protein that was isolated had Leu-39 as its N-terminal residue and 50% had Ser-40 suggesting two adjacent processing sites. However, the possibility of proteolytic removal of Leu-39 during the isolation of the enzyme cannot be excluded. Undergoes proteolytic cleavage in the C-terminal region corresponding to the loss of approximately 12 AA residues from the C-terminus. Succinylated at Lys-287 and Lys-1291. Desuccinylated at Lys-1291 by SIRT5, leading to activation. In terms of processing, glutarylated. Glutarylation levels increase during fasting. Deglutarylated by SIRT5 at Lys-55, Lys-219, Lys-412, Lys-889, Lys-892, Lys-915, Lys-1360 and Lys-1486, leading to activation. As to expression, primarily in the liver and small intestine.

The protein localises to the mitochondrion. It localises to the nucleus. Its subcellular location is the nucleolus. The protein resides in the cell membrane. It catalyses the reaction hydrogencarbonate + NH4(+) + 2 ATP = carbamoyl phosphate + 2 ADP + phosphate + 2 H(+). With respect to regulation, requires N-acetyl-L-glutamate (NAG) as an allosteric activator. N-acetyl-L-beta-phenylglutamate (Phe-NAG) can also activate CPSase I, but with an activation constant that is 2-fold higher than that for NAG. Functionally, involved in the urea cycle of ureotelic animals where the enzyme plays an important role in removing excess ammonia from the cell. The chain is Carbamoyl-phosphate synthase [ammonia], mitochondrial (Cps1) from Rattus norvegicus (Rat).